The chain runs to 173 residues: Cytochrome c-type biogenesis protein CcmE (173 aa).

The Cytoplasmic portion of the chain corresponds to 1–8 (MNPRRKSR). Residues 9–29 (FKLVIFVVLGIAIASGLMLYA) traverse the membrane as a helical; Signal-anchor for type II membrane protein segment. Over 30–173 (LRQNIDLFYT…RDRQEKEGAK (144 aa)) the chain is Periplasmic. Heme-binding residues include histidine 131 and tyrosine 135. Positions 152–173 (GIEAADLKGESARDRQEKEGAK) are disordered. Positions 156-173 (ADLKGESARDRQEKEGAK) are enriched in basic and acidic residues.

This sequence belongs to the CcmE/CycJ family.

The protein resides in the cell inner membrane. Its function is as follows. Heme chaperone required for the biogenesis of c-type cytochromes. Transiently binds heme delivered by CcmC and transfers the heme to apo-cytochromes in a process facilitated by CcmF and CcmH. This is Cytochrome c-type biogenesis protein CcmE from Haemophilus influenzae (strain ATCC 51907 / DSM 11121 / KW20 / Rd).